The primary structure comprises 164 residues: Phosphopantetheine adenylyltransferase (164 aa).

Threonine 10 is a substrate binding site. Residues 10 to 11 (TF) and histidine 18 each bind ATP. 3 residues coordinate substrate: lysine 44, leucine 76, and arginine 90. ATP contacts are provided by residues 91–93 (GLR), glutamate 101, and 126–132 (YAFISSS).

The protein belongs to the bacterial CoaD family. In terms of assembly, homohexamer. Requires Mg(2+) as cofactor.

Its subcellular location is the cytoplasm. The catalysed reaction is (R)-4'-phosphopantetheine + ATP + H(+) = 3'-dephospho-CoA + diphosphate. It functions in the pathway cofactor biosynthesis; coenzyme A biosynthesis; CoA from (R)-pantothenate: step 4/5. Functionally, reversibly transfers an adenylyl group from ATP to 4'-phosphopantetheine, yielding dephospho-CoA (dPCoA) and pyrophosphate. This is Phosphopantetheine adenylyltransferase from Halorhodospira halophila (strain DSM 244 / SL1) (Ectothiorhodospira halophila (strain DSM 244 / SL1)).